Reading from the N-terminus, the 367-residue chain is GDSL esterase/lipase 3 (367 aa).

The signal sequence occupies residues 1-23 (MVRLVLIIFFVYTIILSIGSINC). The active-site Nucleophile is the S42. N-linked (GlcNAc...) asparagine glycosylation is found at N175, N194, and N321. Active-site residues include D329 and H332. N351 is a glycosylation site (N-linked (GlcNAc...) asparagine).

It belongs to the 'GDSL' lipolytic enzyme family.

Its subcellular location is the secreted. The protein is GDSL esterase/lipase 3 (GLIP3) of Arabidopsis thaliana (Mouse-ear cress).